The chain runs to 206 residues: Probable GTP-binding protein EngB (206 aa).

In terms of domain architecture, EngB-type G spans 8 to 195 (RSDEVVLVGR…EDAVNSHFDA (188 aa)). GTP is bound by residues 16-23 (GRSNVGKS), 41-45 (GVTRQ), 60-63 (DLPG), 140-143 (NKMD), and 175-177 (ITA). Residues serine 23 and threonine 43 each contribute to the Mg(2+) site.

This sequence belongs to the TRAFAC class TrmE-Era-EngA-EngB-Septin-like GTPase superfamily. EngB GTPase family. The cofactor is Mg(2+).

Functionally, necessary for normal cell division and for the maintenance of normal septation. In Halobacterium salinarum (strain ATCC 29341 / DSM 671 / R1), this protein is Probable GTP-binding protein EngB.